Reading from the N-terminus, the 85-residue chain is uncharacterized protein (85 aa).

This is an uncharacterized protein from Saccharomyces cerevisiae (strain ATCC 204508 / S288c) (Baker's yeast).